A 239-amino-acid polypeptide reads, in one-letter code: Bidirectional sugar transporter SWEET8 (239 aa).

At 1-6 the chain is on the extracellular side; the sequence is MVDAKQ. Residues 7–27 traverse the membrane as a helical segment; it reads VRFIIGVIGNVISFGLFAAPA. The 90-residue stretch at 9 to 98 folds into the MtN3/slv 1 domain; it reads FIIGVIGNVI…VYLMYCGHKK (90 aa). The Cytoplasmic portion of the chain corresponds to 28 to 44; that stretch reads KTFWRIFKKKSVEEFSY. A helical membrane pass occupies residues 45–65; the sequence is VPYVATVMNCMLWVFYGLPVV. At 66-69 the chain is on the extracellular side; that stretch reads HKDS. Residues 70 to 90 traverse the membrane as a helical segment; the sequence is ILVSTINGVGLVIELFYVGVY. Topologically, residues 91-103 are cytoplasmic; that stretch reads LMYCGHKKNHRRN. A helical membrane pass occupies residues 104-124; that stretch reads ILGFLALEVILVVAIILITLF. Residues 125-135 lie on the Extracellular side of the membrane; it reads ALKGDFVKQTF. The MtN3/slv 2 domain maps to 134 to 185; it reads TFVGVICDVFNIAMYGAPSLAIIKVVKTKSVEYMPFLLSLVCFVNAGIWTTY. A helical transmembrane segment spans residues 136-156; that stretch reads VGVICDVFNIAMYGAPSLAII. At 157 to 168 the chain is on the cytoplasmic side; sequence KVVKTKSVEYMP. Residues 169 to 189 traverse the membrane as a helical segment; it reads FLLSLVCFVNAGIWTTYSLIF. Topologically, residues 190–194 are extracellular; the sequence is KIDYY. A helical membrane pass occupies residues 195–215; that stretch reads VLASNGIGTFLALSQLIVYFM. Over 216 to 239 the chain is Cytoplasmic; it reads YYKSTPKEKTVKPSEVEISATERV.

It belongs to the SWEET sugar transporter family. Forms homooligomers and heterooligomers with SWEET4, SWEET5, SWEET6, SWEET7, SWEET9, SWEET10, SWEET11, SWEET13, SWEET15, SWEET16 and SWEET17. In terms of tissue distribution, expressed in inflorescences, embryo sacs and pollen, and at a lower level in stems. Barely detected in roots, leaves and seedlings.

It is found in the cell membrane. Functionally, mediates both low-affinity uptake and efflux of sugar across the plasma membrane. Required, in pollen, for microspore cell integrity and primexine pattern formation. The sequence is that of Bidirectional sugar transporter SWEET8 from Arabidopsis thaliana (Mouse-ear cress).